Reading from the N-terminus, the 314-residue chain is Olfactory receptor 14K1 (314 aa).

At 1 to 23 (MTNQTQMMEFLLVRFTENWVLLR) the chain is on the extracellular side. Asparagine 3 is a glycosylation site (N-linked (GlcNAc...) asparagine). Residues 24–44 (LHALLFSLIYLTAVLMNLVII) traverse the membrane as a helical segment. Topologically, residues 45–52 (LLMILDHR) are cytoplasmic. Residues 53–73 (LHMAMYFFLRHLSFLDLCLIS) form a helical membrane-spanning segment. Topologically, residues 74 to 97 (ATVPKSILNSVASTDSISFLGCVL) are extracellular. Cysteines 95 and 187 form a disulfide. Residues 98–118 (QLFLVVLLAGSEIGILTAMSY) traverse the membrane as a helical segment. Residues 119–131 (DRYAAICCPLHCE) lie on the Cytoplasmic side of the membrane. Residues 132–152 (AVMSRGLCVQLMALSWLNRGA) form a helical membrane-spanning segment. The Extracellular portion of the chain corresponds to 153 to 194 (LGLLYTAGTFSLNFYGSDELHQFFCDVPALLKLTCSKEHAII). Residues 195 to 215 (SVSVAIGVCYAFSCLVCIVVS) form a helical membrane-spanning segment. The Cytoplasmic segment spans residues 216 to 235 (YVYIFSAVLRISQRQRQSKA). A helical transmembrane segment spans residues 236 to 256 (FSNCVPHLIVVTVFLVTGAVA). The Extracellular segment spans residues 257-269 (YLKPGSDAPSILD). The chain crosses the membrane as a helical span at residues 270 to 290 (LLVSVFYSVAPPTLNPVIYCL). Topologically, residues 291–314 (KNKDIKSALSKVLWNVRSSGVMKR) are cytoplasmic.

It belongs to the G-protein coupled receptor 1 family.

The protein localises to the cell membrane. In terms of biological role, odorant receptor. The polypeptide is Olfactory receptor 14K1 (OR14K1) (Homo sapiens (Human)).